A 200-amino-acid polypeptide reads, in one-letter code: Holliday junction branch migration complex subunit RuvA (200 aa).

A domain I region spans residues Met1–Ile63. A domain II region spans residues Asn64–Leu142. Positions Asn143–His149 are flexible linker. The tract at residues Ala150–Ala200 is domain III.

It belongs to the RuvA family. As to quaternary structure, homotetramer. Forms an RuvA(8)-RuvB(12)-Holliday junction (HJ) complex. HJ DNA is sandwiched between 2 RuvA tetramers; dsDNA enters through RuvA and exits via RuvB. An RuvB hexamer assembles on each DNA strand where it exits the tetramer. Each RuvB hexamer is contacted by two RuvA subunits (via domain III) on 2 adjacent RuvB subunits; this complex drives branch migration. In the full resolvosome a probable DNA-RuvA(4)-RuvB(12)-RuvC(2) complex forms which resolves the HJ.

It is found in the cytoplasm. The RuvA-RuvB-RuvC complex processes Holliday junction (HJ) DNA during genetic recombination and DNA repair, while the RuvA-RuvB complex plays an important role in the rescue of blocked DNA replication forks via replication fork reversal (RFR). RuvA specifically binds to HJ cruciform DNA, conferring on it an open structure. The RuvB hexamer acts as an ATP-dependent pump, pulling dsDNA into and through the RuvAB complex. HJ branch migration allows RuvC to scan DNA until it finds its consensus sequence, where it cleaves and resolves the cruciform DNA. The polypeptide is Holliday junction branch migration complex subunit RuvA (Staphylococcus saprophyticus subsp. saprophyticus (strain ATCC 15305 / DSM 20229 / NCIMB 8711 / NCTC 7292 / S-41)).